Consider the following 347-residue polypeptide: tRNA N6-adenosine threonylcarbamoyltransferase (347 aa).

2 residues coordinate Fe cation: His111 and His115. Residues Leu134–Gly138, Asp167, Gly180, and Asn276 each bind substrate. A Fe cation-binding site is contributed by Asp304.

It belongs to the KAE1 / TsaD family. It depends on Fe(2+) as a cofactor.

It localises to the cytoplasm. It carries out the reaction L-threonylcarbamoyladenylate + adenosine(37) in tRNA = N(6)-L-threonylcarbamoyladenosine(37) in tRNA + AMP + H(+). Functionally, required for the formation of a threonylcarbamoyl group on adenosine at position 37 (t(6)A37) in tRNAs that read codons beginning with adenine. Is involved in the transfer of the threonylcarbamoyl moiety of threonylcarbamoyl-AMP (TC-AMP) to the N6 group of A37, together with TsaE and TsaB. TsaD likely plays a direct catalytic role in this reaction. The sequence is that of tRNA N6-adenosine threonylcarbamoyltransferase from Nitrosospira multiformis (strain ATCC 25196 / NCIMB 11849 / C 71).